We begin with the raw amino-acid sequence, 195 residues long: Ureidoglycolate lyase (195 aa).

This sequence belongs to the ureidoglycolate lyase family. As to quaternary structure, homodimer.

It carries out the reaction (S)-ureidoglycolate = urea + glyoxylate. It functions in the pathway nitrogen metabolism; (S)-allantoin degradation. Its function is as follows. Catalyzes the catabolism of the allantoin degradation intermediate (S)-ureidoglycolate, generating urea and glyoxylate. Involved in the utilization of allantoin as secondary nitrogen source when primary sources are limiting. The chain is Ureidoglycolate lyase (DAL3) from Saccharomyces cerevisiae (strain ATCC 204508 / S288c) (Baker's yeast).